The sequence spans 1386 residues: DNA-directed RNA polymerase subunit beta (1386 aa).

The protein belongs to the RNA polymerase beta chain family. In terms of assembly, the RNAP catalytic core consists of 2 alpha, 1 beta, 1 beta' and 1 omega subunit. When a sigma factor is associated with the core the holoenzyme is formed, which can initiate transcription.

The catalysed reaction is RNA(n) + a ribonucleoside 5'-triphosphate = RNA(n+1) + diphosphate. Functionally, DNA-dependent RNA polymerase catalyzes the transcription of DNA into RNA using the four ribonucleoside triphosphates as substrates. The polypeptide is DNA-directed RNA polymerase subunit beta (Nitratiruptor sp. (strain SB155-2)).